A 116-amino-acid chain; its full sequence is Large ribosomal subunit protein bL20c (116 aa).

It belongs to the bacterial ribosomal protein bL20 family.

The protein localises to the plastid. It localises to the chloroplast. Functionally, binds directly to 23S ribosomal RNA and is necessary for the in vitro assembly process of the 50S ribosomal subunit. It is not involved in the protein synthesizing functions of that subunit. The sequence is that of Large ribosomal subunit protein bL20c from Cryptomeria japonica (Japanese cedar).